The chain runs to 1984 residues: Sodium channel protein type 9 subunit alpha (1984 aa).

The Cytoplasmic portion of the chain corresponds to 1 to 125; the sequence is MAMLPPPGPQ…RRISIKILVH (125 aa). A compositionally biased stretch (basic and acidic residues) spans 26–39; the sequence is RISEEKAKGHKDEK. Residues 26-55 are disordered; it reads RISEEKAKGHKDEKKDDEEEGPKPSSDLEA. An I repeat occupies 112-410; that stretch reads FSPLRRISIK…VAMAYEEQNQ (299 aa). The chain crosses the membrane as a helical span at residues 126 to 145; that stretch reads SLFSMLIMCTILTNCIFMTM. Over 146–150 the chain is Extracellular; sequence SNPPD. The helical transmembrane segment at 151-172 threads the bilayer; it reads WTKNVEYTFTGIYTFESLIKIL. Residues 173-185 are Cytoplasmic-facing; that stretch reads ARGFCVGEFTFLR. The chain crosses the membrane as a helical span at residues 186–204; that stretch reads DPWNWLDFVVIVFAYLTEF. At 205–210 the chain is on the extracellular side; sequence VNLGNV. A helical transmembrane segment spans residues 211-227; sequence SALRTFRVLRALKTISV. Over 228–241 the chain is Cytoplasmic; sequence IPGLKTIVGALIQS. Residues 242–267 traverse the membrane as a helical segment; the sequence is VKKLSDVMILTVFCLSVFALIGLQLF. Topologically, residues 268-346 are extracellular; it reads MGNLKHKCFR…PDYGYTSFDT (79 aa). Cysteine 275 and cysteine 324 form a disulfide bridge. Residues 347 to 363 constitute an intramembrane region (pore-forming); the sequence is FGWAFLALFRLMTQDYW. The Extracellular segment spans residues 364–376; that stretch reads ENLYQQTLRAAGK. A helical membrane pass occupies residues 377 to 402; that stretch reads TYMIFFVVVIFLGSFYLINLILAVVA. Residues 402-449 adopt a coiled-coil conformation; sequence AMAYEEQNQANIEEAKQKELEFQQMLDRLKKEQEEAEAIAAAAAEYTS. Residues 403–744 lie on the Cytoplasmic side of the membrane; that stretch reads MAYEEQNQAN…FIYFIVMDPF (342 aa). Positions 458–471 are enriched in low complexity; it reads LSESSSETSRLSSK. Disordered stretches follow at residues 458 to 540 and 574 to 609; these read LSES…SIRG and HSIF…RSPP. Basic residues predominate over residues 474–486; the sequence is KERRNRRKKKKQK. Basic and acidic residues-rich tracts occupy residues 489–509 and 574–584; these read SGEE…ESIR and HSIFGDNESRR. A coiled-coil region spans residues 684 to 708; it reads LRQRAMSRASILTNTVEELEESRQK. An II repeat occupies 725 to 988; that stretch reads CSPYWIKFKK…EEDTDANNLQ (264 aa). Residues 745-761 traverse the membrane as a helical segment; that stretch reads VDLAITICIVLNTLFMA. The Extracellular segment spans residues 762–770; it reads MEHHPMTDE. The helical transmembrane segment at 771-795 threads the bilayer; sequence FKNVLAVGNLVFTGIFAAEMVLKLI. Residues 796–804 lie on the Cytoplasmic side of the membrane; it reads AMDPYEYFQ. A helical membrane pass occupies residues 805 to 821; the sequence is VGWNIFDSLIVTLSLVE. Over 822-830 the chain is Extracellular; it reads LFLADVEGL. A helical membrane pass occupies residues 831–847; the sequence is SVLRSFRLLRVFKLAKS. The Cytoplasmic segment spans residues 848 to 864; it reads WPTLNMLIKIIGNSVGA. A helical membrane pass occupies residues 865–887; the sequence is LGNLTLVLAIIVFIFAVVGMQLF. Topologically, residues 888-914 are extracellular; it reads GKSYKECVCKINENCKLPRWHMNDFFH. A disulfide bridge links cysteine 896 with cysteine 902. Positions 915-927 form an intramembrane region, pore-forming; that stretch reads SFLIVFRVLCGEW. Residues 928–939 are Extracellular-facing; that stretch reads IETMWDCMEVAG. Cysteine 934 and cysteine 943 are oxidised to a cystine. Residues 940–966 traverse the membrane as a helical segment; sequence QTMCLIVYMMVMVIGNLVVLNLFLALL. Topologically, residues 967-1185 are cytoplasmic; that stretch reads LSSFSSDNLT…WWTIRKTCYR (219 aa). Disordered regions lie at residues 1015-1039 and 1089-1145; these read KKPK…YISN and PIAP…EPIN. Positions 1019-1035 are enriched in basic and acidic residues; that stretch reads GSKDTKRTADPNNKREN. The span at 1135-1145 shows a compositional bias: acidic residues; sequence GEEEAEAEPIN. Residues 1178–1486 form an III repeat; it reads TIRKTCYRIV…KKYYNAMKKL (309 aa). A helical transmembrane segment spans residues 1186–1210; the sequence is IVEHSWFESFIVLMILLSSGALAFE. Residues 1211–1222 are Extracellular-facing; it reads DIYIEKKKTIKI. A helical transmembrane segment spans residues 1223 to 1248; it reads ILEYADKIFTYIFILEMLLKWVAYGY. Topologically, residues 1249 to 1250 are cytoplasmic; it reads KT. The helical transmembrane segment at 1251–1276 threads the bilayer; the sequence is YFTNAWCWLDFLIVDVSLVTLVANTL. At 1277–1285 the chain is on the extracellular side; sequence GYSDLGPIK. The chain crosses the membrane as a helical span at residues 1286–1302; the sequence is SLRTLRALRPLRALSRF. Over 1303 to 1315 the chain is Cytoplasmic; it reads EGMRVVVNALIGA. A helical membrane pass occupies residues 1316 to 1340; the sequence is IPSIMNVLLVCLIFWLIFSIMGVNL. Topologically, residues 1341–1392 are extracellular; the sequence is FAGKFYECVNTTDGSRFSVSQVANRSECFALMNVSGNVRWKNLKVNFDNVGL. Residues cysteine 1348 and cysteine 1368 are joined by a disulfide bond. Residues 1393-1403 constitute an intramembrane region (pore-forming); the sequence is GYLSLLQVATF. Topologically, residues 1404–1429 are extracellular; that stretch reads KGWMDIMYAAVDSVNVNAQPIYEYNL. A helical membrane pass occupies residues 1430-1455; that stretch reads YMYIYFVIFIIFGSFFTLNLFIGVII. Topologically, residues 1456-1512 are cytoplasmic; the sequence is DNFNQQKKKLGGQDIFMTEEQKKYYNAMKKLGSKKPQKPIPRPGNKFQGCIFDLVTN. Serine 1488 is subject to Phosphoserine; by PKC. The stretch at 1495–1793 is one IV repeat; that stretch reads IPRPGNKFQG…WEKFDPDATQ (299 aa). The helical transmembrane segment at 1513 to 1532 threads the bilayer; sequence QAFDITIMVLICLNMVTMMV. Residues 1533 to 1543 are Extracellular-facing; the sequence is EKEGQTDYMSF. A helical membrane pass occupies residues 1544–1565; that stretch reads VLYWINVVFIILFTGECVLKLI. Residues 1566-1574 lie on the Cytoplasmic side of the membrane; it reads SLRHYYFTV. Residues 1575 to 1596 form a helical membrane-spanning segment; it reads GWNIFDFVVVILSIVGMFLAEM. Over 1597–1605 the chain is Extracellular; the sequence is IEKYFVSPT. The chain crosses the membrane as a helical span at residues 1606–1625; it reads LFRVIRLARIGRILRLIKGA. The Cytoplasmic segment spans residues 1626 to 1638; sequence KGIRTLLFALMMS. The chain crosses the membrane as a helical span at residues 1639–1661; sequence LPALFNIGLLLFLVMFIYAIFGM. Topologically, residues 1662–1684 are extracellular; it reads SNFAYVKKEAGINDMFNFETFGN. The segment at residues 1685 to 1697 is an intramembrane region (pore-forming); that stretch reads SMICLFQITTSAG. Topologically, residues 1698-1731 are extracellular; it reads WDGLLAPILNSAPPDCDPKKVHPGSSVEGDCGNP. Cysteines 1713 and 1728 form a disulfide. A helical transmembrane segment spans residues 1732–1757; sequence SVGIFYFVSYIIISFLVVVNMYIAVI. The Cytoplasmic segment spans residues 1758 to 1984; that stretch reads LENFSVATEE…EDKEKDESRK (227 aa). The 30-residue stretch at 1887–1916 folds into the IQ domain; it reads EDVSATIIQRAYRRYRLRQNVKNISSIYIK. The disordered stretch occupies residues 1933–1984; it reads DNVNENSSPEKTDATASTISPPSYDSVTKPDQEKYETDKTEKEDKEKDESRK. The segment covering 1946–1958 has biased composition (polar residues); the sequence is ATASTISPPSYDS. Residues 1960–1984 are compositionally biased toward basic and acidic residues; it reads TKPDQEKYETDKTEKEDKEKDESRK.

This sequence belongs to the sodium channel (TC 1.A.1.10) family. Nav1.7/SCN9A subfamily. The Nav1.7 voltage-gated sodium channel consists of an ion-conducting alpha subunit SCN9A which is functional on its own regulated by one or more beta-1 (SCN1B), beta-2 (SCN2B), beta-3 (SCN3B) and beta-4 (SCN4B) subunits. SCN1B and SCN3B are non-covalently associated with SCN9A. SCN2B and SCN4B are disulfide-linked to SCN9A. SCN1B regulates channel inactivation. Interacts with NEDD4 and NEDD4L; regulates Nav1.7 activity most probably through ubiquitination and subsequent endocytosis. Interacts with TMEM233; modulates the gating properties of NaV1.7. In terms of processing, ubiquitinated by NEDD4L; which may promote its endocytosis. Post-translationally, phosphorylation at Ser-1488 by PKC in a highly conserved cytoplasmic loop increases peak sodium currents. Expressed strongly in sciatic nerves, with moderate levels in kidney. Not detected in liver, brain and muscle.

Its subcellular location is the cell membrane. The protein localises to the cell projection. It is found in the neuron projection. It localises to the axon. The catalysed reaction is Na(+)(in) = Na(+)(out). In terms of biological role, pore-forming subunit of Nav1.7, a voltage-gated sodium (Nav) channel that directly mediates the depolarizing phase of action potentials in excitable membranes. Navs, also called VGSCs (voltage-gated sodium channels) or VDSCs (voltage-dependent sodium channels), operate by switching between closed and open conformations depending on the voltage difference across the membrane. In the open conformation they allow Na(+) ions to selectively pass through the pore, along their electrochemical gradient. The influx of Na(+) ions provokes membrane depolarization, initiating the propagation of electrical signals throughout cells and tissues. Nav1.7 plays a crucial role in controlling the excitability and action potential propagation from nociceptor neurons, thereby contributing to the sensory perception of pain. The chain is Sodium channel protein type 9 subunit alpha from Mus musculus (Mouse).